Here is a 53-residue protein sequence, read N- to C-terminus: UPF0337 protein LJ_0034.1 (53 aa).

The disordered stretch occupies residues 27–53 (AREVEGKAQQAKGKVKSKATEVKEDLE). Residues 44 to 53 (KATEVKEDLE) show a composition bias toward basic and acidic residues.

It belongs to the UPF0337 (CsbD) family.

The protein is UPF0337 protein LJ_0034.1 of Lactobacillus johnsonii (strain CNCM I-12250 / La1 / NCC 533).